Reading from the N-terminus, the 438-residue chain is uncharacterized protein (438 aa).

Residue His-59 coordinates Zn(2+). The Proton acceptor role is filled by Glu-62. His-63 and Glu-139 together coordinate Zn(2+).

The protein belongs to the peptidase M16 family. The cofactor is Zn(2+).

This is an uncharacterized protein from Mycobacterium bovis (strain ATCC BAA-935 / AF2122/97).